Here is a 988-residue protein sequence, read N- to C-terminus: Squamosa promoter-binding-like protein 16 (988 aa).

Residues 52–79 (GTPVDLTRPSKKVRSGSPGSGGGGGGNY) form a disordered region. Gly residues predominate over residues 69 to 78 (PGSGGGGGGN). The SBP-type zinc finger occupies 79–156 (YPKCQVDNCK…DGHNRRRRKT (78 aa)). The Zn(2+) site is built by Cys-82, Cys-87, Cys-104, His-107, Cys-123, Cys-126, His-130, and Cys-142. The short motif at 139–155 (KRSCRRRLDGHNRRRRK) is the Bipartite nuclear localization signal element. Disordered regions lie at residues 240-262 (RKNP…SSPS) and 289-416 (GFGN…DTST). 3 stretches are compositionally biased toward polar residues: residues 250–262 (NPQN…SSPS), 301–311 (LTSSDHSATTS), and 327–358 (RTSS…FTSS). Low complexity predominate over residues 368-379 (ASSTKYYSSASS).

The cofactor is Zn(2+).

It localises to the nucleus. In terms of biological role, trans-acting factor that binds specifically to the consensus nucleotide sequence 5'-TNCGTACAA-3'. The protein is Squamosa promoter-binding-like protein 16 (SPL16) of Arabidopsis thaliana (Mouse-ear cress).